A 265-amino-acid polypeptide reads, in one-letter code: MIKLQKLKLYGFNNLTKSLSFCIYDICYANTNDSRNSYISYIDEQYNAIRLTKILKKTCSIIGANVLNIFHQDYEPQGASVTILVCEEPMSMEKIDALNKNIVSSSVLAHLDKSHICVHTYPESHPQSGICTFRADIEVSTCGIISPLNALNYLIHQLESDIVTIEYRVRGFTRDIHGIKHFIDHKINSIQNFMSDDIKSMYDMVDVNVYQENIFHTRMLLREFNLKNYLFNINLENLEKEERSYIKKLLSKEMREIYYGRNISR.

The active-site Schiff-base intermediate with substrate; via pyruvic acid is the S114. At S114 the chain carries Pyruvic acid (Ser); by autocatalysis. Catalysis depends on H119, which acts as the Proton acceptor; for processing activity. C142 functions as the Proton donor; for catalytic activity in the catalytic mechanism.

It belongs to the prokaryotic AdoMetDC family. Type 2 subfamily. In terms of assembly, heterooctamer of four alpha and four beta chains arranged as a tetramer of alpha/beta heterodimers. Requires pyruvate as cofactor. Post-translationally, is synthesized initially as an inactive proenzyme. Formation of the active enzyme involves a self-maturation process in which the active site pyruvoyl group is generated from an internal serine residue via an autocatalytic post-translational modification. Two non-identical subunits are generated from the proenzyme in this reaction, and the pyruvate is formed at the N-terminus of the alpha chain, which is derived from the carboxyl end of the proenzyme. The post-translation cleavage follows an unusual pathway, termed non-hydrolytic serinolysis, in which the side chain hydroxyl group of the serine supplies its oxygen atom to form the C-terminus of the beta chain, while the remainder of the serine residue undergoes an oxidative deamination to produce ammonia and the pyruvoyl group blocking the N-terminus of the alpha chain.

It carries out the reaction S-adenosyl-L-methionine + H(+) = S-adenosyl 3-(methylsulfanyl)propylamine + CO2. It participates in amine and polyamine biosynthesis; S-adenosylmethioninamine biosynthesis; S-adenosylmethioninamine from S-adenosyl-L-methionine: step 1/1. Its function is as follows. Catalyzes the decarboxylation of S-adenosylmethionine to S-adenosylmethioninamine (dcAdoMet), the propylamine donor required for the synthesis of the polyamines spermine and spermidine from the diamine putrescine. The polypeptide is S-adenosylmethionine decarboxylase proenzyme (Buchnera aphidicola subsp. Acyrthosiphon pisum (strain APS) (Acyrthosiphon pisum symbiotic bacterium)).